The sequence spans 160 residues: SsrA-binding protein (160 aa).

The segment at 132-160 is disordered; the sequence is KIHDKRDDMQKKDAQQEIARALKSSNRYE. Over residues 135–146 the composition is skewed to basic and acidic residues; it reads DKRDDMQKKDAQ.

The protein belongs to the SmpB family.

The protein resides in the cytoplasm. Its function is as follows. Required for rescue of stalled ribosomes mediated by trans-translation. Binds to transfer-messenger RNA (tmRNA), required for stable association of tmRNA with ribosomes. tmRNA and SmpB together mimic tRNA shape, replacing the anticodon stem-loop with SmpB. tmRNA is encoded by the ssrA gene; the 2 termini fold to resemble tRNA(Ala) and it encodes a 'tag peptide', a short internal open reading frame. During trans-translation Ala-aminoacylated tmRNA acts like a tRNA, entering the A-site of stalled ribosomes, displacing the stalled mRNA. The ribosome then switches to translate the ORF on the tmRNA; the nascent peptide is terminated with the 'tag peptide' encoded by the tmRNA and targeted for degradation. The ribosome is freed to recommence translation, which seems to be the essential function of trans-translation. The chain is SsrA-binding protein from Leptospira borgpetersenii serovar Hardjo-bovis (strain JB197).